The primary structure comprises 262 residues: Nurim (262 aa).

Topologically, residues 1–4 are nuclear; the sequence is MAPA. A helical membrane pass occupies residues 5-28; the sequence is LLLVPAALASFILAFGTGVEFVRF. The Perinuclear space portion of the chain corresponds to 29-58; the sequence is TSLRPLLGGIPESGGPDARHGWLAALQDRS. Residues 59-80 traverse the membrane as a helical segment; that stretch reads ILASLAWDLCLLLLFVVQHSLM. The Nuclear segment spans residues 81–97; it reads ATEAVKAWTSRYFGVLQ. The chain crosses the membrane as a helical span at residues 98-114; it reads RSLYVACTALALQLVMR. The Perinuclear space portion of the chain corresponds to 115-133; sequence YWETTPRGPVLWEARAEPW. A helical transmembrane segment spans residues 134–164; it reads ATWVPLLCFVLHVVSWLLIFSILLVFDYAEL. The Nuclear portion of the chain corresponds to 165 to 191; sequence MGLKQVYYHVLGLGEPLSLKSPRALRL. A helical membrane pass occupies residues 192–210; sequence FSHLRHPVCVELLTVLWVV. Over 211–216 the chain is Perinuclear space; it reads PTLGTD. Residues 217–234 form a helical membrane-spanning segment; it reads RLLLALLFTLYLGLAHGL. The Nuclear portion of the chain corresponds to 235–262; it reads DQQDLRYLRSQLQRKLHLLSRPQDGEAE.

It belongs to the nurim family.

It is found in the nucleus inner membrane. The chain is Nurim (Nrm) from Mus musculus (Mouse).